The sequence spans 438 residues: Xylose isomerase (438 aa).

2 residues coordinate Mg(2+): Asp-306 and Asp-308.

The protein belongs to the xylose isomerase family. Homotetramer. The cofactor is Mg(2+).

Its subcellular location is the cytoplasm. The catalysed reaction is alpha-D-xylose = alpha-D-xylulofuranose. In Caldicellulosiruptor bescii (strain ATCC BAA-1888 / DSM 6725 / KCTC 15123 / Z-1320) (Anaerocellum thermophilum), this protein is Xylose isomerase.